A 284-amino-acid polypeptide reads, in one-letter code: Nucleotide-binding protein PP_0949 (284 aa).

An ATP-binding site is contributed by 8-15 (GRSGSGKS). 60–63 (DARN) provides a ligand contact to GTP.

Belongs to the RapZ-like family.

Functionally, displays ATPase and GTPase activities. This is Nucleotide-binding protein PP_0949 from Pseudomonas putida (strain ATCC 47054 / DSM 6125 / CFBP 8728 / NCIMB 11950 / KT2440).